The following is a 79-amino-acid chain: ATP synthase subunit 9, mitochondrial (79 aa).

Helical transmembrane passes span 21–41 and 59–79; these read SGLIGAGAGVGIVFGCLILAF and FALTEAIGLLALVMAFLILFI.

It belongs to the ATPase C chain family. F-type ATPases have 2 components, CF(1) - the catalytic core - and CF(0) - the membrane proton channel. CF(1) has five subunits: alpha(3), beta(3), gamma(1), delta(1), epsilon(1). CF(0) has three main subunits: a, b and c.

The protein resides in the mitochondrion membrane. Functionally, mitochondrial membrane ATP synthase (F(1)F(0) ATP synthase or Complex V) produces ATP from ADP in the presence of a proton gradient across the membrane which is generated by electron transport complexes of the respiratory chain. F-type ATPases consist of two structural domains, F(1) - containing the extramembraneous catalytic core and F(0) - containing the membrane proton channel, linked together by a central stalk and a peripheral stalk. During catalysis, ATP synthesis in the catalytic domain of F(1) is coupled via a rotary mechanism of the central stalk subunits to proton translocation. Part of the complex F(0) domain. A homomeric c-ring of probably 10 subunits is part of the complex rotary element. This is ATP synthase subunit 9, mitochondrial (ATP9) from Acanthamoeba castellanii (Amoeba).